We begin with the raw amino-acid sequence, 736 residues long: Transcription regulator protein BACH1 (736 aa).

Positions 34-100 (CDVTIFVEGQ…AYTAKLILSK (67 aa)) constitute a BTB domain. Residue Ser-196 is modified to Phosphoserine. Basic and acidic residues predominate over residues 286–295 (MEPEETKKDP). Disordered regions lie at residues 286–312 (MEPE…FPHN) and 349–389 (KPLS…RSSV). Ser-364 and Ser-445 each carry phosphoserine. In terms of domain architecture, bZIP spans 557-620 (CIHDIRRRSK…GETKQNLTGL (64 aa)). The basic motif stretch occupies residues 562 to 578 (RRRSKNRIAAQRCRKRK). A leucine-zipper region spans residues 582 to 589 (IQNLESEI). The tract at residues 680–719 (LPPCARGNSEPGYARGQESQQMSTATSEQAGPAEQCRQSG) is disordered. Polar residues predominate over residues 696 to 708 (QESQQMSTATSEQ).

The protein belongs to the bZIP family. CNC subfamily. As to quaternary structure, heterodimer of BACH1 and MAFK. Ubiquitinated by the SCF(FBXL17) complex or by the by the SCF(FBXO22) complex, leading to its degradation by the proteasome. Under oxidative stress, reactive oxygen species covalently modify cysteine residues on the bZIP domain of BACH1 and release it from chromatin. If the BTB domain of BACH1 remains intact, its beta1-alpha6 degron is recognized by FBXO22, promoting its ubiquitination and degradation. If the structural integrity of the beta1-alpha6 degron is compromised, FBXL17 will transiently associate with the BACH1 BTB dimer and remodel it into stably bound monomer for ubiquitination and degradation.

It localises to the nucleus. In terms of biological role, transcriptional regulator that acts as a repressor or activator, depending on the context. Binds to NF-E2 DNA binding sites. Plays important roles in coordinating transcription activation and repression by MAFK. Together with MAF, represses the transcription of genes under the control of the NFE2L2 oxidative stress pathway. The chain is Transcription regulator protein BACH1 from Homo sapiens (Human).